We begin with the raw amino-acid sequence, 289 residues long: Purine nucleoside phosphorylase (289 aa).

Methionine 1 is modified (N-acetylmethionine). Residues serine 33, histidine 64, and arginine 84–histidine 86 each bind phosphate. Tyrosine 88 provides a ligand contact to a purine D-ribonucleoside. Position 116 (alanine 116) interacts with phosphate. A purine D-ribonucleoside is bound by residues glutamate 201 and methionine 219. Serine 220 is a binding site for phosphate. Asparagine 243 provides a ligand contact to a purine D-ribonucleoside. Residue serine 251 is modified to Phosphoserine. Residue histidine 257 coordinates a purine D-ribonucleoside.

It belongs to the PNP/MTAP phosphorylase family. In terms of assembly, homotrimer.

Its subcellular location is the cytoplasm. The catalysed reaction is inosine + phosphate = alpha-D-ribose 1-phosphate + hypoxanthine. It catalyses the reaction guanosine + phosphate = alpha-D-ribose 1-phosphate + guanine. The enzyme catalyses 2'-deoxyguanosine + phosphate = 2-deoxy-alpha-D-ribose 1-phosphate + guanine. It carries out the reaction 2'-deoxyinosine + phosphate = 2-deoxy-alpha-D-ribose 1-phosphate + hypoxanthine. It functions in the pathway purine metabolism; purine nucleoside salvage. Its function is as follows. Catalyzes the phosphorolytic breakdown of the N-glycosidic bond in the beta-(deoxy)ribonucleoside molecules, with the formation of the corresponding free purine bases and pentose-1-phosphate. Preferentially acts on 6-oxopurine nucleosides including inosine and guanosine. This Bos taurus (Bovine) protein is Purine nucleoside phosphorylase (PNP).